The following is a 1261-amino-acid chain: Rho GTPase-activating protein 29 (1261 aa).

Phosphoserine occurs at positions 171, 176, 179, and 190. Positions 192 to 462 (LELDNVLLKN…SAKLYDPGQE (271 aa)) constitute an F-BAR domain. Positions 296-418 (RKNEMEKQRK…EILAQLRTLV (123 aa)) form a coiled coil. Positions 481–501 (NVNKHLNSSQPSGFGPANSLE) are disordered. 3 positions are modified to phosphoserine: S499, S519, and S552. The segment covering 541 to 559 (SESTGGSSESRSLDSESIS) has biased composition (low complexity). Residues 541–600 (SESTGGSSESRSLDSESISPGDFHRKLPRTPSSGTMSSADDLDEREPPSPSETGPNSLGT) are disordered. The segment at 612–657 (THKFRKLRSPTKCRDCEGIVVFQGVECEECLLVCHRKCLENLVIIC) adopts a Phorbol-ester/DAG-type zinc-finger fold. Residues 671–886 (AEFTQVAKKE…FLITYSQKIF (216 aa)) form the Rho-GAP domain. 2 positions are modified to phosphoserine: S913 and S949. Positions 981 to 1011 (SASQKIEDGKTPKPLSLKSDRSTNNVERHTP) are disordered. Residues 998–1010 (KSDRSTNNVERHT) are compositionally biased toward basic and acidic residues. A phosphoserine mark is found at S1019, S1144, and S1146. Disordered stretches follow at residues 1117 to 1153 (HSINATQPSKPYAEPVRSVREASERRSSDSYPLAPVR) and 1178 to 1238 (GNEE…VNPM). Residues 1133-1144 (RSVREASERRSS) are compositionally biased toward basic and acidic residues. The interaction with PTPN13/PTPL1 stretch occupies residues 1258 to 1261 (PQFV).

As to quaternary structure, interacts with PTPN13/PTPL1. Interacts with RAP2A via its coiled coil domain. Interacts with RASIP1. Widely expressed. Highly expressed in skeletal muscle and heart. Expressed at intermediate level in placenta, liver and pancreas. Weakly expressed in brain, lung and kidney.

In terms of biological role, GTPase activator for the Rho-type GTPases by converting them to an inactive GDP-bound state. Has strong activity toward RHOA, and weaker activity toward RAC1 and CDC42. May act as a specific effector of RAP2A to regulate Rho. In concert with RASIP1, suppresses RhoA signaling and dampens ROCK and MYH9 activities in endothelial cells and plays an essential role in blood vessel tubulogenesis. This is Rho GTPase-activating protein 29 (ARHGAP29) from Homo sapiens (Human).